The sequence spans 150 residues: UPF0756 membrane protein ABSDF1616 (150 aa).

4 consecutive transmembrane segments (helical) span residues 1–21, 45–65, 83–103, and 115–135; these read MLAQFDVNLVVLLVLLICGLL, FFPYIQAHGLNLGILILTIGV, FISFKSLVAIAIGLLVAWLGG, and VVAGLLIGTVAGVALLRGVPV.

Belongs to the UPF0756 family.

The protein resides in the cell membrane. This chain is UPF0756 membrane protein ABSDF1616, found in Acinetobacter baumannii (strain SDF).